The chain runs to 62 residues: Photosystem II reaction center protein Z (62 aa).

Helical transmembrane passes span 8 to 28 and 41 to 61; these read LIAAFVALSFAMIIGVPVVFS and WGGAAAWVVLLFVAALASIVV.

This sequence belongs to the PsbZ family. In terms of assembly, PSII is composed of 1 copy each of membrane proteins PsbA, PsbB, PsbC, PsbD, PsbE, PsbF, PsbH, PsbI, PsbJ, PsbK, PsbL, PsbM, PsbT, PsbX, PsbY, PsbZ, Psb30/Ycf12, peripheral proteins PsbO, CyanoQ (PsbQ), PsbU, PsbV and a large number of cofactors. It forms dimeric complexes.

The protein localises to the cellular thylakoid membrane. In terms of biological role, may control the interaction of photosystem II (PSII) cores with the light-harvesting antenna, regulates electron flow through the 2 photosystem reaction centers. PSII is a light-driven water plastoquinone oxidoreductase, using light energy to abstract electrons from H(2)O, generating a proton gradient subsequently used for ATP formation. In Acaryochloris marina (strain MBIC 11017), this protein is Photosystem II reaction center protein Z.